Here is a 138-residue protein sequence, read N- to C-terminus: Large ribosomal subunit protein bL12c (138 aa).

Belongs to the bacterial ribosomal protein bL12 family. As to quaternary structure, homodimer. Part of the ribosomal stalk of the 50S ribosomal subunit. Forms a multimeric L10(L12)X complex, where L10 forms an elongated spine to which 2 to 4 L12 dimers bind in a sequential fashion. Binds GTP-bound translation factors.

The protein localises to the plastid. Functionally, forms part of the ribosomal stalk which helps the ribosome interact with GTP-bound translation factors. Is thus essential for accurate translation. In Euglena longa (Euglenophycean alga), this protein is Large ribosomal subunit protein bL12c.